The chain runs to 250 residues: MILFNNVNKVWPNGKQVLKNITLEINKGELVAVIGLSGAGKTTLLKTINKINDISSGEIIIDFDKTKDHYEITKTRGKKLQKLRQKIGLMSQEYNNIANKTVLQNVLNARVSSQKGINKIIGFFKREDKLIALNSLNKLNLLDYAYIRADNLSGGQQQRVALARTLAQQPFLIIADEPVSALDPILANQVMKDFKNINKKDGITVIINIHHVDLAKKYATRVIGLNNGEIVFDDVPSKLDAQAMKKIYGE.

The 246-residue stretch at 2-247 (ILFNNVNKVW…KLDAQAMKKI (246 aa)) folds into the ABC transporter domain. ATP is bound at residue 35–42 (GLSGAGKT).

The protein belongs to the ABC transporter superfamily. Phosphonates importer (TC 3.A.1.9.1) family. The complex is composed of two ATP-binding proteins (PhnC), two transmembrane proteins (PhnE) and a solute-binding protein (PhnD).

The protein resides in the cell membrane. It carries out the reaction phosphonate(out) + ATP + H2O = phosphonate(in) + ADP + phosphate + H(+). Its function is as follows. Part of the ABC transporter complex PhnCDE involved in phosphonates import. Responsible for energy coupling to the transport system. In Mycoplasma capricolum subsp. capricolum (strain California kid / ATCC 27343 / NCTC 10154), this protein is Phosphonates import ATP-binding protein PhnC.